The primary structure comprises 273 residues: SUMO-1 cysteine protease S273R (273 aa).

Residues histidine 168 and asparagine 187 contribute to the active site. Glutamine 226 contacts substrate. Cysteine 232 functions as the Nucleophile in the catalytic mechanism.

The protein belongs to the peptidase C63 family.

It is found in the host cytoplasm. It localises to the virion. Its function is as follows. Cysteine protease that plays several role during infection including processing of the structural polyprotein or inhibition of the host immune response. Catalyzes the maturation of the pp220 and pp62 polyprotein precursors into core-shell proteins. Plays a role in the disruption of host pyroptosis via specific cleavage of gasdermin D/GSDMD. In addition, strongly decreases the host cGAS-STING signaling by targeting IKBKE via its enzymatic activity. Also impairs host FOXJ1-mediated antiviral effect via degradation of FOXJ1. The sequence is that of SUMO-1 cysteine protease S273R from Ornithodoros (relapsing fever ticks).